The primary structure comprises 394 residues: MVKLIKSIKAHNDKAWCAKSHPTLPLLATASTDRTSHIYNLSAKKNFPLLAKLEEAHKRSVRSVDFKPPLGGVESPVDDFLDLPALATGSFDSTISIWGIDEPEEQDSMDDGDDDDDDEKINDKHAQLLTSINNEWNLMAIIEGHENEVKSVAWNYQGNLLASCSRDKTIWIWETDPETLEEFECISVLSDHQHDVKHITWHPSQNLLASSSYDDTIKLYKQDEDDDDWSCVGILNGHGGTVWCSSFENPTSPTFDANKIRLVSASDDLSVRIWSSIVEQTEQIEDTTDRLPSSIKSTNNEMVWEEEAILPAIHKYAVYSVSWSAKTGKISSTGSDGKLVIYRETESKKWEIESVYESAHGVYEINSVSWCTLDDKTEVLVTAGDDGAINIWEP.

7 WD repeats span residues 10–49 (AHND…NFPL), 56–108 (AHKR…EQDS), 144–184 (GHEN…EEFE), 191–230 (DHQH…DDWS), 237–284 (GHGG…TEQI), 313–352 (IHKY…KWEI), and 359–394 (AHGV…IWEP).

This sequence belongs to the WD repeat CIA1 family. As to quaternary structure, interacts with NAR1.

It localises to the cytoplasm. Its subcellular location is the nucleus. In terms of biological role, essential component of the cytosolic iron-sulfur (Fe/S) protein assembly machinery. Required for the maturation of extramitochondrial Fe/S proteins. The protein is Probable cytosolic iron-sulfur protein assembly protein 1 of Debaryomyces hansenii (strain ATCC 36239 / CBS 767 / BCRC 21394 / JCM 1990 / NBRC 0083 / IGC 2968) (Yeast).